We begin with the raw amino-acid sequence, 117 residues long: Large ribosomal subunit protein bL20 (117 aa).

The protein belongs to the bacterial ribosomal protein bL20 family.

Binds directly to 23S ribosomal RNA and is necessary for the in vitro assembly process of the 50S ribosomal subunit. It is not involved in the protein synthesizing functions of that subunit. The chain is Large ribosomal subunit protein bL20 from Magnetococcus marinus (strain ATCC BAA-1437 / JCM 17883 / MC-1).